We begin with the raw amino-acid sequence, 190 residues long: Small ribosomal subunit protein uS4 (190 aa).

Residues 105–181 (RRLQTLVYKL…RKKAKAAEGG (77 aa)) form the S4 RNA-binding domain. Residues 163–190 (GGGRPGRVRRKKAKAAEGGDGDAEEDEE) form a disordered region. Residues 181 to 190 (GDGDAEEDEE) show a composition bias toward acidic residues.

Belongs to the universal ribosomal protein uS4 family.

The chain is Small ribosomal subunit protein uS4 (RPS9) from Podospora anserina (Pleurage anserina).